Here is a 351-residue protein sequence, read N- to C-terminus: Probable cell division control protein 7 homolog 2 (351 aa).

The 321-residue stretch at 21–341 folds into the Protein kinase domain; that stretch reads YTPIEKIGEG…ASDALSHPFF (321 aa). ATP-binding positions include 27 to 35 and K50; that span reads IGEGSFSVV. The Proton acceptor role is filled by D137.

The protein belongs to the protein kinase superfamily. Ser/Thr protein kinase family. CDC7 subfamily. The cofactor is Mg(2+).

The enzyme catalyses L-seryl-[protein] + ATP = O-phospho-L-seryl-[protein] + ADP + H(+). It catalyses the reaction L-threonyl-[protein] + ATP = O-phospho-L-threonyl-[protein] + ADP + H(+). In terms of biological role, serine/threonine-protein kinase. Needed for the initiation of DNA synthesis during mitosis as well as for synaptonemal complex formation and commitment to recombination during meiosis. This is Probable cell division control protein 7 homolog 2 (CDC7-2) from Encephalitozoon cuniculi (strain GB-M1) (Microsporidian parasite).